Reading from the N-terminus, the 83-residue chain is uncharacterized protein (83 aa).

Its subcellular location is the plastid. The protein localises to the chloroplast. This is an uncharacterized protein from Pinus thunbergii (Japanese black pine).